The chain runs to 331 residues: Peroxidase 60 (331 aa).

A signal peptide spans 1 to 26 (MAVKISTIEVLILSLALLSFGHGCYG). Disulfide bonds link cysteine 37–cysteine 113, cysteine 70–cysteine 75, cysteine 119–cysteine 321, and cysteine 198–cysteine 230. Histidine 68 functions as the Proton acceptor in the catalytic mechanism. Aspartate 69, glycine 74, aspartate 76, and serine 78 together coordinate Ca(2+). Proline 161 provides a ligand contact to substrate. Histidine 191 provides a ligand contact to heme b. Threonine 192 is a Ca(2+) binding site. Asparagine 245 carries an N-linked (GlcNAc...) asparagine glycan. Positions 248 and 253 each coordinate Ca(2+).

This sequence belongs to the peroxidase family. Classical plant (class III) peroxidase subfamily. Heme b is required as a cofactor. Ca(2+) serves as cofactor. In terms of tissue distribution, expressed in roots, slightly in leaves.

The protein localises to the secreted. It carries out the reaction 2 a phenolic donor + H2O2 = 2 a phenolic radical donor + 2 H2O. Functionally, removal of H(2)O(2), oxidation of toxic reductants, biosynthesis and degradation of lignin, suberization, auxin catabolism, response to environmental stresses such as wounding, pathogen attack and oxidative stress. These functions might be dependent on each isozyme/isoform in each plant tissue. The sequence is that of Peroxidase 60 (PER60) from Arabidopsis thaliana (Mouse-ear cress).